Here is a 332-residue protein sequence, read N- to C-terminus: UPF0285 protein MK0078 (332 aa).

The protein belongs to the UPF0285 family.

The sequence is that of UPF0285 protein MK0078 from Methanopyrus kandleri (strain AV19 / DSM 6324 / JCM 9639 / NBRC 100938).